Reading from the N-terminus, the 160-residue chain is 6,7-dimethyl-8-ribityllumazine synthase (160 aa).

Residues tryptophan 28, 59–61 (ALE), and 81–83 (CVI) contribute to the 5-amino-6-(D-ribitylamino)uracil site. 86-87 (ET) is a (2S)-2-hydroxy-3-oxobutyl phosphate binding site. Histidine 89 serves as the catalytic Proton donor. A 5-amino-6-(D-ribitylamino)uracil-binding site is contributed by asparagine 114. Arginine 128 lines the (2S)-2-hydroxy-3-oxobutyl phosphate pocket.

The protein belongs to the DMRL synthase family.

The catalysed reaction is (2S)-2-hydroxy-3-oxobutyl phosphate + 5-amino-6-(D-ribitylamino)uracil = 6,7-dimethyl-8-(1-D-ribityl)lumazine + phosphate + 2 H2O + H(+). The protein operates within cofactor biosynthesis; riboflavin biosynthesis; riboflavin from 2-hydroxy-3-oxobutyl phosphate and 5-amino-6-(D-ribitylamino)uracil: step 1/2. Its function is as follows. Catalyzes the formation of 6,7-dimethyl-8-ribityllumazine by condensation of 5-amino-6-(D-ribitylamino)uracil with 3,4-dihydroxy-2-butanone 4-phosphate. This is the penultimate step in the biosynthesis of riboflavin. The polypeptide is 6,7-dimethyl-8-ribityllumazine synthase (Corynebacterium urealyticum (strain ATCC 43042 / DSM 7109)).